The primary structure comprises 1444 residues: MYAVYKQAHPPTGLEFSMYCNFFNNSERNLVVAGTSQLYVYRLNRDSEAPTKNDRSTDGKAHREHREKLELVASFSFFGNVMSMASVQLAGAKRDALLLSFKDAKLSVVEYDPGTHDLKTLSLHYFEEPELRDGFVQNVHTPRVRVDPDGRCAAMLIYGTRLVVLPFRRESLAEEHEGLVGEGQRSSFLPSYIIDVRALDEKLLNIVDLQFLHGYYEPTLLILFEPNQTWPGRVAVRQDTCSIVAISLNITQKVHPVIWSLTSLPFDCTQALAVPKPIGGVVIFAVNSLLYLNQSVPPYGVALNSLTTGTTAFPLRTQEGVRITLDCAQAAFISYDKMVISLKGGEIYVLTLITDGMRSVRAFHFDKAAASVLTTSMVTMEPGYLFLGSRLGNSLLLKYTEKLQEPPASTAREAADKEEPPSKKKRVDATTGWSGSKSVPQDEVDEIEVYGSEAQSGTQLATYSFEVCDSILNIGPCANAAMGEPAFLSEEFQNSPEPDLEIVVCSGYGKNGALSVLQKSIRPQVVTTFELPGCYDMWTVIAPVRKEQEETLKGEGTEPEPGAPEAEDDGRRHGFLILSREDSTMILQTGQEIMELDASGFATQGPTVFAGNIGDNRYIVQVSPLGIRLLEGVNQLHFIPVDLGSPIVQCAVADPYVVIMSAEGHVTMFLLKNDSYGGRHHRLALHKPPLHHQSKVITLCVYRDVSGMFTTESRLGGVRDELGGRGGPEAEGQGAETSPTVDDEEEMLYGDSGSLFSPSKEEARRSSQPPADRDPAPFRAEPTHWCLLVRENGAMEIYQLPDWRLVFLVKNFPVGQRVLVDSSFGQPTTQGEARKEEATRQGELPLVKEVLLVALGSRQRRPYLLVHVDQELLIYEAFPHDSQLGQGNLKVRFKKVPHNINFREKKPKPSKKKAEGGSTEEGTGPRGRVARFRYFEDIYGYSGVFICGPSPHWLLVTGRGALRLHPMGIDGPIDSFAPFHNINCPRGFLYFNRQGELRISVLPAYLSYDAPWPVRKIPLRCTAHYVAYHVESKVYAVATSTSTPCTRVPRMTGEEKEFETIERDERYVHPQQEAFCIQLISPVSWEAIPNARIELEEWEHVTCMKTVSLRSEETVSGLKGYVAAGTCLMQGEEVTCRGRILIMDVIEVVPEPGQPLTKNKFKVLYEKEQKGPVTALCHCNGHLVSAIGQKIFLWSLRASELTGMAFIDTQLYIHQMISVKNFILAADVMKSISLLRYQEESKTLSLVSRDAKPLEVYSVDFMVDNAQLGFLVSDRDRNLMVYMYLPEAKESFGGMRLLRRADFHVGAHVNTFWRTPCRGAAEGPSKKSVVWENKHITWFATLDGGIGLLLPMQEKTYRRLLMLQNALTTMLPHHAGLNPRAFRMLHVDRRVLQNAVRNVLDGELLNRYLYLSTMERGELAKKIGTTPDIILDDLLETDRVTAHF.

Disordered stretches follow at residues 406-439, 549-571, 716-778, and 902-924; these read PPAS…SKSV, EETL…DDGR, GGVR…PAPF, and FREK…EGTG. Residues 413-422 are compositionally biased toward basic and acidic residues; the sequence is EAADKEEPPS. 2 positions are modified to phosphoserine: serine 757 and serine 767. Positions 759 to 776 are enriched in basic and acidic residues; the sequence is SKEEARRSSQPPADRDPA. Positions 894-909 match the Nuclear localization signal motif; that stretch reads KKVPHNINFREKKPKP.

This sequence belongs to the CPSF1 family. Component of the cleavage and polyadenylation specificity factor (CPSF) complex, composed of CPSF1, CPSF2, CPSF3, CPSF4 and FIP1L1. Found in a complex with CPSF1, FIP1L1 and PAPOLA. Interacts with FIP1L1, TENT2/GLD2 and SRRM1. Interacts with TUT1; the interaction is direct and mediates the recruitment of the CPSF complex on the 3'UTR of selected pre-mRNAs. The N-terminus is blocked.

The protein localises to the nucleus. Its subcellular location is the nucleoplasm. Functionally, component of the cleavage and polyadenylation specificity factor (CPSF) complex that plays a key role in pre-mRNA 3'-end formation, recognizing the AAUAAA signal sequence and interacting with poly(A) polymerase and other factors to bring about cleavage and poly(A) addition. This subunit is involved in the RNA recognition step of the polyadenylation reaction. May play a role in eye morphogenesis and the development of retinal ganglion cell projections to the midbrain. The sequence is that of Cleavage and polyadenylation specificity factor subunit 1 (CPSF1) from Bos taurus (Bovine).